The primary structure comprises 888 residues: C2H2 zinc finger transcription factor sltA (888 aa).

3 disordered regions span residues 1–78, 132–176, and 388–407; these read MSTS…QRSP, IDSQ…SSEN, and RSSM…ASAP. Composition is skewed to polar residues over residues 23–32, 167–176, and 388–397; these read PSLSASTSIE, GLGTSLSSEN, and RSSMPSNREP. C2H2-type zinc fingers lie at residues 500 to 522 and 561 to 586; these read QKCK…EKTH and YKCK…EKAH. Positions 589-663 are disordered; sequence DYVRSKHNGR…PTQTGSGDFP (75 aa). Residues 602-632 show a composition bias toward polar residues; it reads KASNGATPQTPSIATPSSKAQGITTPLTGSE.

It localises to the nucleus. Transcription factor that contributes to azole resistance by coregulating the expression of the drug target erg11A and the drug efflux pump mdr1. Binds to the 5'-AGGCA-3' motif in the promoters of ergosterol biosynthesis and drug pump genes to regulate their expression. Is able to interact with the promoters of sltA, sltB, erg11A, erg13A, erg24A, mdr1, abcE and mfsC. Involved in antifungal drug resistance to azoles, terbinafine, and simvastatin but not amphotericin B or caspofungin. This is C2H2 zinc finger transcription factor sltA from Aspergillus fumigatus (strain CBS 144.89 / FGSC A1163 / CEA10) (Neosartorya fumigata).